Reading from the N-terminus, the 747-residue chain is Kinesin-like protein KIF3B (747 aa).

Met1 is subject to N-acetylmethionine. Ser2 is subject to N-acetylserine; in Kinesin-like protein KIF3B, N-terminally processed. The Kinesin motor domain maps to 9–340; sequence SVRVVVRCRP…LRYANRAKNI (332 aa). An ATP-binding site is contributed by 96–103; sequence GQTGTGKT. A coiled-coil region spans residues 346 to 579; sequence VNEDPKDALL…EQTQNELTRE (234 aa). 2 disordered regions span residues 374–412 and 699–747; these read IGRRKRREKRREGGGSGGGGEEEEEEGEEGEEEGDDKDD and QVDA…LVPK. Positions 393-411 are enriched in acidic residues; the sequence is GEEEEEEGEEGEEEGDDKD. Residues 580 to 747 are globular; it reads LKLKHLIIEN…YPQSRGLVPK (168 aa). Residues 701–710 show a composition bias toward polar residues; the sequence is DASSFESTAN. Basic residues predominate over residues 711–721; the sequence is KKSKARPKSGR. The segment covering 722 to 735 has biased composition (low complexity); the sequence is KSGSSSSSSGTPAS.

This sequence belongs to the TRAFAC class myosin-kinesin ATPase superfamily. Kinesin family. Kinesin II subfamily. As to quaternary structure, heterodimer of KIF3A and KIF3B. KIF3A/KIF3B heterodimer interacts with KIFAP3 forming a heterotrimeric (KIF3A/KIF3B/KIFAP3) complex. Interacts directly with IFT20. Interacts with the SMC3 subunit of the cohesin complex. Interacts with FLCN.

It localises to the cytoplasm. The protein resides in the cytoskeleton. The protein localises to the cell projection. It is found in the cilium. Its subcellular location is the dendritic spine. Functionally, microtubule-based molecular motor that transport intracellular cargos, such as vesicles, organelles and protein complexes. Uses ATP hydrolysis to generate force to bind and move along the microtubule. Plays a role in cilia formation. Involved in photoreceptor integrity and opsin trafficking in rod photoreceptors. Transports vesicles containing N-methyl-D-aspartate (NMDA) receptor subunit GRIN2A into neuronal dendrites. The sequence is that of Kinesin-like protein KIF3B (KIF3B) from Homo sapiens (Human).